The following is a 450-amino-acid chain: tRNA modification GTPase MnmE (450 aa).

(6S)-5-formyl-5,6,7,8-tetrahydrofolate is bound by residues Arg23, Glu81, and Lys120. Residues 216–373 (GIHLVLAGKP…LLKKIATLAG (158 aa)) enclose the TrmE-type G domain. GTP is bound by residues 226–231 (NAGKSS), 245–251 (TPQAGTT), 270–273 (DTAG), and 337–340 (NKAD). 2 residues coordinate Mg(2+): Ser230 and Thr251. Lys450 lines the (6S)-5-formyl-5,6,7,8-tetrahydrofolate pocket.

The protein belongs to the TRAFAC class TrmE-Era-EngA-EngB-Septin-like GTPase superfamily. TrmE GTPase family. Homodimer. Heterotetramer of two MnmE and two MnmG subunits. The cofactor is K(+).

The protein resides in the cytoplasm. Its function is as follows. Exhibits a very high intrinsic GTPase hydrolysis rate. Involved in the addition of a carboxymethylaminomethyl (cmnm) group at the wobble position (U34) of certain tRNAs, forming tRNA-cmnm(5)s(2)U34. This Dichelobacter nodosus (strain VCS1703A) protein is tRNA modification GTPase MnmE.